Consider the following 520-residue polypeptide: Pleckstrin homology domain-containing family A member 8 (520 aa).

The PH domain occupies 1-93 (MEGVLYKWTN…WLVALGSAKA (93 aa)). Threonine 139 carries the post-translational modification Phosphothreonine. Serine 145 is modified (phosphoserine). Threonine 153 is modified (phosphothreonine). The span at 275-285 (GEESLGNHDSD) shows a compositional bias: basic and acidic residues. Positions 275–305 (GEESLGNHDSDLAQPELHSTSSSPESHWEED) are disordered. The glycolipid transfer protein homology domain stretch occupies residues 311-520 (TFFSTMNTSF…VHGLESDEVV (210 aa)).

Homodimer. Interacts with ARF1; the interaction together with phosphatidylinositol 4-phosphate binding is required for FAPP2 GlcCer transfer ability.

The protein resides in the cytoplasm. The protein localises to the golgi apparatus. Its subcellular location is the trans-Golgi network membrane. It localises to the membrane. In terms of biological role, cargo transport protein that is required for apical transport from the trans-Golgi network (TGN). Transports AQP2 from the trans-Golgi network (TGN) to sites of AQP2 phosphorylation. Mediates the non-vesicular transport of glucosylceramide (GlcCer) from the trans-Golgi network (TGN) to the plasma membrane and plays a pivotal role in the synthesis of complex glycosphingolipids. Binding of both phosphatidylinositol 4-phosphate (PIP) and ARF1 are essential for the GlcCer transfer ability. Also required for primary cilium formation, possibly by being involved in the transport of raft lipids to the apical membrane, and for membrane tubulation. The protein is Pleckstrin homology domain-containing family A member 8 (PLEKHA8) of Bos taurus (Bovine).